The chain runs to 355 residues: MRRQLRSRRAPAFPYGYGYRLDDQDEVNQNYLADEEEEAEEARVMVVPDLEEEEKEEEEEKEEDEKEEEESHHQDTRSAWWQKLQIVNEYLWDPEKRMSLARTGQSLSLLLVIYFFFYASLAAVITLCMYTLFLTISPYVPTFTERVKPPGVMIRPFAHSLNFNFNVSEPDTWQHYVISLNGFLQGYNDSLQEEMNVDCPPGQYFIQDGDEDEDKKACQFKRSFLKNCSGLEDPTFGYSTGQPCILLKMNRIVGFRPELGDPVKVSCKVQRGDENDIRSISYYPESASFDLRYYPYYGKLTHVNYTSPLVAMHFTDVVKNQAVPVQCQLKGKGIINDVINDRFVGRVIFTLNIET.

Over 1 to 108 the chain is Nuclear; the sequence is MRRQLRSRRA…SLARTGQSLS (108 aa). The tract at residues 35–76 is disordered; the sequence is EEEEAEEARVMVVPDLEEEEKEEEEEKEEDEKEEEESHHQDT. Residues 49-68 show a composition bias toward acidic residues; that stretch reads DLEEEEKEEEEEKEEDEKEE. The helical; Signal-anchor for type II membrane protein transmembrane segment at 109–129 threads the bilayer; the sequence is LLLVIYFFFYASLAAVITLCM. Topologically, residues 130–355 are perinuclear space; sequence YTLFLTISPY…RVIFTLNIET (226 aa).

This sequence belongs to the X(+)/potassium ATPases subunit beta family. Associates with a SMAD7-transcriptional complex. Interacts with SNW1 and TOR1AIP1. Does not associate with known Na,K-ATPase alpha-subunits. As to expression, expressed in skeletal muscle (at protein level). Expressed during postnatal development in skeletal muscle and heart.

It localises to the nucleus inner membrane. Functionally, may act as a transcriptional coregulator during muscle development through its interaction with SNW1. Has lost its ancestral function as a Na,K-ATPase beta-subunit. The sequence is that of Protein ATP1B4 (ATP1B4) from Sus scrofa (Pig).